The following is a 113-amino-acid chain: Non-specific lipid-transfer protein 6 (113 aa).

A signal peptide spans 1-19; sequence MRSLLLAVCLVLALHCGEA. Intrachain disulfides connect Cys23–Cys70, Cys33–Cys47, Cys48–Cys95, and Cys68–Cys109.

Belongs to the plant LTP family.

Functionally, plant non-specific lipid-transfer proteins transfer phospholipids as well as galactolipids across membranes. May play a role in wax or cutin deposition in the cell walls of expanding epidermal cells and certain secretory tissues. In Arabidopsis thaliana (Mouse-ear cress), this protein is Non-specific lipid-transfer protein 6 (LTP6).